The following is a 459-amino-acid chain: MVKRYAVILAAGQGTRMKSKQYKVLHPVCGKPMVQHVVDQVLQLGIEKLITVVGFGAEQVKAQLGDQSEYAFQQEQLGTAHAVMQAAPYLQEKDGVTLVVCGDTPLITAETMQALLDHHLATNAKATILTAVADNPAGYGRIVRDAHGNVEKIVEHKDASEQERAIKEINTGTYCFDNKSLFEALTHVSNNNAQGEYYLTDVIEILKSNGSIISAYKAPSFEETIGVNDRVALAEAEKIMRERICRKHMMNGVTIIDPAHTYISAEVRIGRDTVIYPGTVIEGKTVIGEDCTIGPNSEIKDCWIGNGTTIRHSVAHDSEIGNDVTIGPFAHIRPSSKIDDEVRIGNFVEVKKSTFGKGSKASHLSYIGDAEVGVNVNLGCGSITVNYDGKNKHITKIEDGAFIGCNANLIAPVTVGKGAYVAAGSTITDDVPENALSIARARQVNKENYVDRLSIKKNS.

Positions 1–230 are pyrophosphorylase; sequence MVKRYAVILA…FEETIGVNDR (230 aa). UDP-N-acetyl-alpha-D-glucosamine is bound by residues 9–12, lysine 23, glutamine 73, and 78–79; these read LAAG and GT. A Mg(2+)-binding site is contributed by aspartate 103. Glycine 140, glutamate 155, asparagine 170, and asparagine 228 together coordinate UDP-N-acetyl-alpha-D-glucosamine. Residue asparagine 228 participates in Mg(2+) binding. The interval 231–251 is linker; the sequence is VALAEAEKIMRERICRKHMMN. Positions 252 to 459 are N-acetyltransferase; that stretch reads GVTIIDPAHT…VDRLSIKKNS (208 aa). UDP-N-acetyl-alpha-D-glucosamine contacts are provided by arginine 333 and lysine 351. Histidine 363 (proton acceptor) is an active-site residue. Residues tyrosine 366 and asparagine 377 each contribute to the UDP-N-acetyl-alpha-D-glucosamine site. Acetyl-CoA-binding positions include 386 to 387, alanine 423, and arginine 440; that span reads NY.

It in the N-terminal section; belongs to the N-acetylglucosamine-1-phosphate uridyltransferase family. This sequence in the C-terminal section; belongs to the transferase hexapeptide repeat family. Homotrimer. Requires Mg(2+) as cofactor.

It localises to the cytoplasm. The enzyme catalyses alpha-D-glucosamine 1-phosphate + acetyl-CoA = N-acetyl-alpha-D-glucosamine 1-phosphate + CoA + H(+). It catalyses the reaction N-acetyl-alpha-D-glucosamine 1-phosphate + UTP + H(+) = UDP-N-acetyl-alpha-D-glucosamine + diphosphate. It functions in the pathway nucleotide-sugar biosynthesis; UDP-N-acetyl-alpha-D-glucosamine biosynthesis; N-acetyl-alpha-D-glucosamine 1-phosphate from alpha-D-glucosamine 6-phosphate (route II): step 2/2. The protein operates within nucleotide-sugar biosynthesis; UDP-N-acetyl-alpha-D-glucosamine biosynthesis; UDP-N-acetyl-alpha-D-glucosamine from N-acetyl-alpha-D-glucosamine 1-phosphate: step 1/1. It participates in bacterial outer membrane biogenesis; LPS lipid A biosynthesis. In terms of biological role, catalyzes the last two sequential reactions in the de novo biosynthetic pathway for UDP-N-acetylglucosamine (UDP-GlcNAc). The C-terminal domain catalyzes the transfer of acetyl group from acetyl coenzyme A to glucosamine-1-phosphate (GlcN-1-P) to produce N-acetylglucosamine-1-phosphate (GlcNAc-1-P), which is converted into UDP-GlcNAc by the transfer of uridine 5-monophosphate (from uridine 5-triphosphate), a reaction catalyzed by the N-terminal domain. This is Bifunctional protein GlmU from Geobacillus sp. (strain WCH70).